We begin with the raw amino-acid sequence, 159 residues long: Growth arrest and DNA damage-inducible protein GADD45 gamma (159 aa).

Positions 43–86 (VYESAKVLNVDPDNVTFCVLAAGEEDEGDIALQIHFTLIQAFCC) are homodimerization.

This sequence belongs to the GADD45 family. Undergoes concentration-dependent homodimerization, which is required for growth inhibititory activity and enhances interaction with PCNA. Interacts with GADD45GIP1. Interacts with PCNA.

Its function is as follows. Involved in the regulation of growth and apoptosis. Mediates activation of stress-responsive MTK1/MEKK4 MAPKKK. The sequence is that of Growth arrest and DNA damage-inducible protein GADD45 gamma (GADD45G) from Homo sapiens (Human).